Consider the following 192-residue polypeptide: Signal peptidase complex catalytic subunit sec11 (192 aa).

The Cytoplasmic portion of the chain corresponds to 1–18 (MLSFLSSNLSSTRQSLAQ). Residues 19–39 (VLNFALVLSTAFMLWKGLSVF) form a helical; Signal-anchor for type II membrane protein membrane-spanning segment. Over 40–192 (TASSSPIVVV…GLMVILQREQ (153 aa)) the chain is Lumenal. Residues serine 53, histidine 92, and aspartate 133 each act as charge relay system in the active site. Residues 177–188 (VLLGIMGLMVIL) form a C-terminal short (CTS) helix region.

The protein belongs to the peptidase S26B family. In terms of assembly, component of the signal peptidase complex (SPC) composed of a catalytic subunit SEC11 and three accessory subunits SPC1, SPC2 and SPC3. The complex induces a local thinning of the ER membrane which is used to measure the length of the signal peptide (SP) h-region of protein substrates. This ensures the selectivity of the complex towards h-regions shorter than 18-20 amino acids. SPC associates with the translocon complex.

It localises to the endoplasmic reticulum membrane. It catalyses the reaction Cleavage of hydrophobic, N-terminal signal or leader sequences from secreted and periplasmic proteins.. Functionally, catalytic component of the signal peptidase complex (SPC) which catalyzes the cleavage of N-terminal signal sequences from nascent proteins as they are translocated into the lumen of the endoplasmic reticulum. Specifically cleaves N-terminal signal peptides that contain a hydrophobic alpha-helix (h-region) shorter than 18-20 amino acids. The protein is Signal peptidase complex catalytic subunit sec11 (sec11) of Aspergillus clavatus (strain ATCC 1007 / CBS 513.65 / DSM 816 / NCTC 3887 / NRRL 1 / QM 1276 / 107).